A 151-amino-acid chain; its full sequence is Methylglyoxal synthase (151 aa).

An MGS-like domain is found at 1–151 (MKKTTRTMAA…DYQAYLAERT (151 aa)). Substrate-binding positions include His-19, Lys-23, 45 to 48 (TGTT), and 65 to 66 (SG). Residue Asp-71 is the Proton donor/acceptor of the active site. Residue His-98 coordinates substrate.

It belongs to the methylglyoxal synthase family.

The catalysed reaction is dihydroxyacetone phosphate = methylglyoxal + phosphate. Functionally, catalyzes the formation of methylglyoxal from dihydroxyacetone phosphate. The polypeptide is Methylglyoxal synthase (Vibrio cholerae serotype O1 (strain ATCC 39541 / Classical Ogawa 395 / O395)).